A 617-amino-acid chain; its full sequence is MANAPGPEIREKFQAALALSRVELHKNPEKEPYKSKYGARALLEEVRALLGPAPEDEDEPAADDGPGDQALGAGEPREAEGPGAQRALRLAVVEFHLGVNHIDTEELSAGEEHLVRCLSLLRPYRLSLGCVSLYIQAQNNLGILWSEREEIETARTYLESSEALYSQYMKEIGSPPLDPTEHFLPEEEKLTEQERSKRFEKVYTHNLYYLAQVYQHMEMFEKAAHYCHSTLKRQLEHNAYHPMEWAINAATLSQFYINKLCFMEARHCLSAANVIFGQTGKIPATEDTPEVEGDVPELYHQRKGEIARCWIKYCLTLMQNAQLSMQDNIGELDLDKQSELRALRKKELDEEESVRKRAVQFGTGELCDAISAVEEKVRYLRPLDFEEARELFLLGQHYVCEAKEFFQIDGYVTDHIEVVQDHSALFKVLSFFEADMERRCKMHKRRIAMLEPLTVDLNPQYYLLVSRQIQFEIAHAYYDMMDLKVAIADKLRDPDSHIVKKINSLNKSALKYYQLFLDSLRDPNKVFPEHIGEDVLRPAMLAKFRVARLYGKIITADPKKELENLATSLEHYKFIVDYCETHPEAAQEIEVELELSKEMVSLLPTKMERFRAKMALT.

Positions 48–83 are disordered; it reads ALLGPAPEDEDEPAADDGPGDQALGAGEPREAEGPG. Over residues 54-66 the composition is skewed to acidic residues; that stretch reads PEDEDEPAADDGP. Ser174 carries the phosphoserine modification.

The protein belongs to the KIF-binding protein family. In terms of assembly, interacts with KIF1B; positively regulates KIF1B microtubule motor activity. Interacts with STMN2. As to expression, in the embryo it is expressed in cortical neurons; expression increases during neuronal development.

It is found in the cytoplasm. The protein localises to the cytoskeleton. Its function is as follows. Activator of KIF1B plus-end-directed microtubule motor activity. Required for organization of axonal microtubules, and axonal outgrowth and maintenance during peripheral and central nervous system development. The polypeptide is KIF-binding protein (Mus musculus (Mouse)).